We begin with the raw amino-acid sequence, 529 residues long: Type I restriction enzyme EcoKI methylase subunit (529 aa).

Residues Gln-148–Arg-153, Thr-178–Gly-180, and Glu-216 contribute to the S-adenosyl-L-methionine site.

Belongs to the N(4)/N(6)-methyltransferase family. In terms of assembly, the type I restriction/modification system is composed of three polypeptides R, M and S. The restriction enzyme has stoichiometry R(2)M(2)S(1). The methyltransferase is composed of M(2)S(1). As to quaternary structure, (Microbial infection) Interacts with Escherichia phage T7 protein Ocr; this interaction leads to the inhibition of the methyltransferase restriction enzyme M.EcoKI composed of M(2)S(1).

It carries out the reaction a 2'-deoxyadenosine in DNA + S-adenosyl-L-methionine = an N(6)-methyl-2'-deoxyadenosine in DNA + S-adenosyl-L-homocysteine + H(+). Functionally, the subtype gamma methyltransferase (M) subunit of a type I restriction enzyme. The M and S subunits together form a methyltransferase (MTase) that methylates A-2 on the top and A-3 on the bottom strand of the sequence 5'-AACN(6)GTGC-3'. In the presence of the R subunit the complex can also act as an endonuclease, binding to the same target sequence but cutting the DNA some distance from this site. Whether the DNA is cut or modified depends on the methylation state of the target sequence. When the target site is unmodified, the DNA is cut. When the target site is hemimethylated, the complex acts as a maintenance MTase modifying the DNA so that both strands become methylated. After locating a non-methylated recognition site, the enzyme complex serves as a molecular motor that translocates DNA in an ATP-dependent manner until a collision occurs that triggers cleavage. The chain is Type I restriction enzyme EcoKI methylase subunit from Escherichia coli (strain K12).